A 115-amino-acid chain; its full sequence is Protein SPIRAL1-like 2 (115 aa).

The segment at 29 to 48 (AKAKPAAAAEKETTPAPVKK) is disordered.

This sequence belongs to the SPIRAL1 family.

Its function is as follows. Acts in maintaining the cortical microtubules organization essential for anisotropic cell growth. In Oryza sativa subsp. japonica (Rice), this protein is Protein SPIRAL1-like 2.